Here is a 73-residue protein sequence, read N- to C-terminus: MEHWGQPIPGAGQPWRQPLPTSGRWWLGAASWWWLGAASWWWLGAAPWWWLGTASWWWLGSRRWHPQSVEQAE.

A helical transmembrane segment spans residues 32–52 (WWWLGAASWWWLGAAPWWWLG).

Detected in brain homogenate, primary neurons, and peripheral blood mononuclear cells (at protein level).

The protein localises to the mitochondrion outer membrane. This Homo sapiens (Human) protein is Alternative prion protein (PRNP).